Reading from the N-terminus, the 691-residue chain is Elongation factor G (691 aa).

The tr-type G domain maps to 8 to 282 (ERVRNIGIAA…AVVDYLPAPV (275 aa)). GTP-binding positions include 17-24 (AHIDAGKT), 81-85 (DTPGH), and 135-138 (NKMD).

Belongs to the TRAFAC class translation factor GTPase superfamily. Classic translation factor GTPase family. EF-G/EF-2 subfamily.

It localises to the cytoplasm. Catalyzes the GTP-dependent ribosomal translocation step during translation elongation. During this step, the ribosome changes from the pre-translocational (PRE) to the post-translocational (POST) state as the newly formed A-site-bound peptidyl-tRNA and P-site-bound deacylated tRNA move to the P and E sites, respectively. Catalyzes the coordinated movement of the two tRNA molecules, the mRNA and conformational changes in the ribosome. This chain is Elongation factor G, found in Prochlorococcus marinus (strain MIT 9515).